Here is a 37-residue protein sequence, read N- to C-terminus: Large ribosomal subunit protein bL36 (37 aa).

This sequence belongs to the bacterial ribosomal protein bL36 family.

This Parasynechococcus marenigrum (strain WH8102) protein is Large ribosomal subunit protein bL36.